A 1163-amino-acid chain; its full sequence is DNA-directed RNA polymerase subunit beta 2 (1163 aa).

This sequence belongs to the RNA polymerase beta chain family. In terms of assembly, the RNAP catalytic core consists of 2 alpha, 1 beta, 1 beta' and 1 omega subunit. When a sigma factor is associated with the core the holoenzyme is formed, which can initiate transcription.

It carries out the reaction RNA(n) + a ribonucleoside 5'-triphosphate = RNA(n+1) + diphosphate. In terms of biological role, DNA-dependent RNA polymerase catalyzes the transcription of DNA into RNA using the four ribonucleoside triphosphates as substrates. The polypeptide is DNA-directed RNA polymerase subunit beta 2 (Nocardia farcinica (strain IFM 10152)).